The chain runs to 60 residues: Large ribosomal subunit protein bL32 (60 aa).

This sequence belongs to the bacterial ribosomal protein bL32 family.

The sequence is that of Large ribosomal subunit protein bL32 from Fervidobacterium nodosum (strain ATCC 35602 / DSM 5306 / Rt17-B1).